The primary structure comprises 322 residues: MLNSFKLSLQYILPKLWLTRLAGWGASKRAGWLTKLVIDLFVKYYKVDMKEAQKPDTASYRTFNEFFVRPLRDEVRPIDTDPNVLVMPADGVISQLGKIEEDKILQAKGHNYSLEALLAGNYLMADLFRNGTFVTTYLSPRDYHRVHMPCNGILREMIYVPGDLFSVNHLTAQNVPNLFARNERVICLFDTEFGPMAQILVGATIVGSIETVWAGTITPPREGIIKRWTWPAGENDGSVALLKGQEMGRFKLGSTVINLFAPGKVDLVEQLESLSVTKIGQPLAVSTETFVTPDAEPAPLPAEEIEAEHDASPLIDDKKDQV.

Catalysis depends on charge relay system; for autoendoproteolytic cleavage activity residues Asp-90, His-147, and Ser-254. Catalysis depends on Ser-254, which acts as the Schiff-base intermediate with substrate; via pyruvic acid; for decarboxylase activity. Residue Ser-254 is modified to Pyruvic acid (Ser); by autocatalysis. The tract at residues 293-322 (PDAEPAPLPAEEIEAEHDASPLIDDKKDQV) is disordered. Residues 308-322 (EHDASPLIDDKKDQV) show a composition bias toward basic and acidic residues.

This sequence belongs to the phosphatidylserine decarboxylase family. PSD-B subfamily. Prokaryotic type I sub-subfamily. In terms of assembly, heterodimer of a large membrane-associated beta subunit and a small pyruvoyl-containing alpha subunit. Pyruvate serves as cofactor. Is synthesized initially as an inactive proenzyme. Formation of the active enzyme involves a self-maturation process in which the active site pyruvoyl group is generated from an internal serine residue via an autocatalytic post-translational modification. Two non-identical subunits are generated from the proenzyme in this reaction, and the pyruvate is formed at the N-terminus of the alpha chain, which is derived from the carboxyl end of the proenzyme. The autoendoproteolytic cleavage occurs by a canonical serine protease mechanism, in which the side chain hydroxyl group of the serine supplies its oxygen atom to form the C-terminus of the beta chain, while the remainder of the serine residue undergoes an oxidative deamination to produce ammonia and the pyruvoyl prosthetic group on the alpha chain. During this reaction, the Ser that is part of the protease active site of the proenzyme becomes the pyruvoyl prosthetic group, which constitutes an essential element of the active site of the mature decarboxylase.

Its subcellular location is the cell membrane. The catalysed reaction is a 1,2-diacyl-sn-glycero-3-phospho-L-serine + H(+) = a 1,2-diacyl-sn-glycero-3-phosphoethanolamine + CO2. Its pathway is phospholipid metabolism; phosphatidylethanolamine biosynthesis; phosphatidylethanolamine from CDP-diacylglycerol: step 2/2. In terms of biological role, catalyzes the formation of phosphatidylethanolamine (PtdEtn) from phosphatidylserine (PtdSer). The chain is Phosphatidylserine decarboxylase proenzyme from Escherichia coli O127:H6 (strain E2348/69 / EPEC).